Consider the following 28-residue polypeptide: Morintide mO6 (28 aa).

In terms of domain architecture, Chitin-binding type-1 spans 1 to 28 (NGLCCSQYGFCGTTSAYCSRANGCQSNC). 2 disulfide bridges follow: Cys-4–Cys-18 and Cys-24–Cys-28.

In terms of tissue distribution, seeds (at protein level).

In terms of biological role, chitin-binding protein which functions in defense against chitin-containing fungal pathogens. This chain is Morintide mO6, found in Moringa oleifera (Horseradish tree).